The following is a 196-amino-acid chain: MFCEKAMELVRELHRAAEGRLPAFNEDGLRQVLEEMKALYEQNQSDVNEAKSSGRGDLIPTIKFRHCSLLRNQRCTVAYLYDRLLRIRALRWEYGSVLPSALRFHMSAEEMDWFNRYKKSLATYMRSLGGDEGLDITQDMKPPKSLYIEVRCLKDYGEFEVEDGTSVLLKKNSQHFLPRWKCEQLIRQGILEHVLS.

Belongs to the GINS1/PSF1 family. As to quaternary structure, component of the GINS complex which is a heterotetramer of GINS1, GINS2, GINS3 and GINS4. Forms a stable subcomplex with GINS4. GINS complex interacts with DNA primase in vitro. Component of the CMG helicase complex, a hexameric ring of related MCM2-7 subunits stabilized by CDC45 and the tetrameric GINS complex.

The protein localises to the nucleus. It is found in the chromosome. Its function is as follows. Required for correct functioning of the GINS complex, a complex that plays an essential role in the initiation of DNA replication, and progression of DNA replication forks. GINS complex is a core component of CDC45-MCM-GINS (CMG) helicase, the molecular machine that unwinds template DNA during replication, and around which the replisome is built. In Bos taurus (Bovine), this protein is DNA replication complex GINS protein PSF1 (GINS1).